The primary structure comprises 676 residues: DNA ligase (676 aa).

Residues 35–39, 84–85, and E118 contribute to the NAD(+) site; these read DYEFD and SL. K120 acts as the N6-AMP-lysine intermediate in catalysis. NAD(+)-binding residues include R141, E184, K299, and K323. The Zn(2+) site is built by C417, C420, C435, and C441. One can recognise a BRCT domain in the interval 600–676; sequence LINRNFEGVN…ISEDEFNAML (77 aa).

The protein belongs to the NAD-dependent DNA ligase family. LigA subfamily. It depends on Mg(2+) as a cofactor. The cofactor is Mn(2+).

It carries out the reaction NAD(+) + (deoxyribonucleotide)n-3'-hydroxyl + 5'-phospho-(deoxyribonucleotide)m = (deoxyribonucleotide)n+m + AMP + beta-nicotinamide D-nucleotide.. Functionally, DNA ligase that catalyzes the formation of phosphodiester linkages between 5'-phosphoryl and 3'-hydroxyl groups in double-stranded DNA using NAD as a coenzyme and as the energy source for the reaction. It is essential for DNA replication and repair of damaged DNA. In Chlorobium phaeobacteroides (strain DSM 266 / SMG 266 / 2430), this protein is DNA ligase.